The primary structure comprises 328 residues: DNA-directed RNA polymerase subunit alpha (328 aa).

The interval 1 to 234 (MQNSPTEYLK…GQLSVFADLE (234 aa)) is alpha N-terminal domain (alpha-NTD). Positions 248-328 (VDPILLRPVD…NWPPAGLEKV (81 aa)) are alpha C-terminal domain (alpha-CTD).

The protein belongs to the RNA polymerase alpha chain family. Homodimer. The RNAP catalytic core consists of 2 alpha, 1 beta, 1 beta' and 1 omega subunit. When a sigma factor is associated with the core the holoenzyme is formed, which can initiate transcription.

The catalysed reaction is RNA(n) + a ribonucleoside 5'-triphosphate = RNA(n+1) + diphosphate. DNA-dependent RNA polymerase catalyzes the transcription of DNA into RNA using the four ribonucleoside triphosphates as substrates. The protein is DNA-directed RNA polymerase subunit alpha of Methylobacillus flagellatus (strain ATCC 51484 / DSM 6875 / VKM B-1610 / KT).